The chain runs to 180 residues: Large ribosomal subunit protein uL5 (180 aa).

This sequence belongs to the universal ribosomal protein uL5 family. As to quaternary structure, part of the 50S ribosomal subunit; part of the 5S rRNA/L5/L18/L25 subcomplex. Contacts the 5S rRNA and the P site tRNA. Forms a bridge to the 30S subunit in the 70S ribosome.

Functionally, this is one of the proteins that bind and probably mediate the attachment of the 5S RNA into the large ribosomal subunit, where it forms part of the central protuberance. In the 70S ribosome it contacts protein S13 of the 30S subunit (bridge B1b), connecting the 2 subunits; this bridge is implicated in subunit movement. Contacts the P site tRNA; the 5S rRNA and some of its associated proteins might help stabilize positioning of ribosome-bound tRNAs. This chain is Large ribosomal subunit protein uL5, found in Streptococcus thermophilus (strain CNRZ 1066).